The chain runs to 361 residues: Endo-1,4-beta-xylanase 2 (361 aa).

The signal sequence occupies residues 1–26 (MHFSTITAALALLGLGAATPTDYSTS). Positions 46–354 (IGTALTIRDD…KPAYSSVLKT (309 aa)) constitute a GH10 domain. N-linked (GlcNAc...) asparagine glycosylation is found at Asn-88 and Asn-130. Glu-160 (proton donor) is an active-site residue. Catalysis depends on Glu-276, which acts as the Nucleophile. The cysteines at positions 304 and 310 are disulfide-linked.

This sequence belongs to the glycosyl hydrolase 10 (cellulase F) family.

It localises to the secreted. The catalysed reaction is Endohydrolysis of (1-&gt;4)-beta-D-xylosidic linkages in xylans.. It functions in the pathway glycan degradation; xylan degradation. Functionally, endo-1,4-beta-xylanase involved in the hydrolysis of xylan, a major structural heterogeneous polysaccharide found in plant biomass representing the second most abundant polysaccharide in the biosphere, after cellulose. Hydrolyzes birch-wood xylan, with a similar activity toward oat-spelt xylan. Also shows weak activities toward pNP-beta-D-cellobioside and pNP-beta-D-xylopyranoside, but no detectable activity toward carboxymethyl cellulose and pNP-beta-L-arabinofuranoside.-. The polypeptide is Endo-1,4-beta-xylanase 2 (xynII) (Aureobasidium pullulans (Black yeast)).